Consider the following 86-residue polypeptide: Small ribosomal subunit protein bS20 (86 aa).

Residues 1–18 are compositionally biased toward basic and acidic residues; the sequence is MANIKSQEKRIRTNERAR. The disordered stretch occupies residues 1-25; it reads MANIKSQEKRIRTNERARLRNQATK.

Belongs to the bacterial ribosomal protein bS20 family.

Functionally, binds directly to 16S ribosomal RNA. This Mycobacteroides abscessus (strain ATCC 19977 / DSM 44196 / CCUG 20993 / CIP 104536 / JCM 13569 / NCTC 13031 / TMC 1543 / L948) (Mycobacterium abscessus) protein is Small ribosomal subunit protein bS20.